A 364-amino-acid polypeptide reads, in one-letter code: Medium-wave-sensitive opsin 1 (364 aa).

Topologically, residues 1-52 (MAQRWGPHALSGVQAQDAYEDSTQASLFTYTNSNNTRGPFEGPNYHIAPRWV) are extracellular. The segment at 17–43 (DAYEDSTQASLFTYTNSNNTRGPFEGP) is required for 11-cis-retinal regeneration. Asparagine 34 carries N-linked (GlcNAc...) asparagine glycosylation. The helical transmembrane segment at 53–77 (YHLTSAWMTIVVIASIFTNGLVLVA) threads the bilayer. The Cytoplasmic segment spans residues 78–89 (TMRFKKLRHPLN). A helical membrane pass occupies residues 90 to 115 (WILVNLAVADLAETVIASTISVVNQV). Over 116–129 (YGYFVLGHPLCVVE) the chain is Extracellular. A disulfide bridge links cysteine 126 with cysteine 203. Residues 130–149 (GYTVSLCGITGLWSLAIISW) form a helical membrane-spanning segment. Topologically, residues 150–168 (ERWLVVCKPFGNVRFDAKL) are cytoplasmic. Residues 169–192 (AIVGIVFSWVWSAVWTAPPIFGWS) form a helical membrane-spanning segment. Residues 193–218 (RYWPYGLKTSCGPDVFSGTSYPGVQS) lie on the Extracellular side of the membrane. Residues 219–246 (YMMVLMVTCCITPLSIIVLCYLHVWLAI) traverse the membrane as a helical segment. Residues 247–268 (RAVAKQQKESESTQKAEKEVTR) are Cytoplasmic-facing. Residues 269–292 (MVVVMVLAYCLCWGPYAFFACFAT) form a helical membrane-spanning segment. Over 293-300 (ANPGYSFH) the chain is Extracellular. Residues 301 to 325 (PLVAALPAYFAKSATIYNPIIYVFM) form a helical membrane-spanning segment. Lysine 312 carries the N6-(retinylidene)lysine modification. Topologically, residues 326–364 (NRQFRNCILQLFGKKVEDSSELSSTSRTEASSVSSVSPA) are cytoplasmic.

This sequence belongs to the G-protein coupled receptor 1 family. Opsin subfamily. As to quaternary structure, monomer. Homodimer. Homotetramer. In terms of processing, O-glycosylated. Post-translationally, phosphorylated on some or all of the serine and threonine residues present in the C-terminal region. Expressed in cone photoreceptor cells.

It is found in the membrane. In terms of biological role, visual pigments are the light-absorbing molecules that mediate vision. They consist of an apoprotein, opsin, covalently linked to cis-retinal. May increase spectral sensitivity in dim light. The protein is Medium-wave-sensitive opsin 1 (OPN1MW) of Cavia porcellus (Guinea pig).